We begin with the raw amino-acid sequence, 572 residues long: Phosphoenolpyruvate-protein phosphotransferase (572 aa).

The Tele-phosphohistidine intermediate role is filled by His-190. Phosphoenolpyruvate-binding residues include Arg-297 and Arg-333. Residues Glu-427 and Asp-451 each coordinate Mg(2+). Residues 450-451 and Arg-461 contribute to the phosphoenolpyruvate site; that span reads ND. The active-site Proton donor is Cys-498.

This sequence belongs to the PEP-utilizing enzyme family. As to quaternary structure, homodimer. The cofactor is Mg(2+).

The protein resides in the cytoplasm. It catalyses the reaction L-histidyl-[protein] + phosphoenolpyruvate = N(pros)-phospho-L-histidyl-[protein] + pyruvate. General (non sugar-specific) component of the phosphoenolpyruvate-dependent sugar phosphotransferase system (sugar PTS). This major carbohydrate active-transport system catalyzes the phosphorylation of incoming sugar substrates concomitantly with their translocation across the cell membrane. Enzyme I transfers the phosphoryl group from phosphoenolpyruvate (PEP) to the phosphoryl carrier protein (HPr). The sequence is that of Phosphoenolpyruvate-protein phosphotransferase (ptsI) from Mycoplasma genitalium (strain ATCC 33530 / DSM 19775 / NCTC 10195 / G37) (Mycoplasmoides genitalium).